The following is a 255-amino-acid chain: MNINKIALIYNKDYKSLAIIEEIKKLYNYCEVEEAEVIIVIGGDGALLHNIHCYMHLNIPFYGVNLGSLGFLMNTLDTKNLLQNIHDSTVTILNPLLMQAKDTSGQIYTALAINEVSIFRKTNQAAKFRIDVNGIERMSELVADGALVATPAGSSAYNLSAGGPILPLESNMLCLTPICAFRPRRWHGALLLSSATIKFEIFNTTKRPVNATADFQEFNNIIQVTVSSTKDKPIKLLFNKNHTLEDRIIKEQFGG.

The active-site Proton acceptor is aspartate 44. NAD(+) is bound by residues 44 to 45 (DG), histidine 49, 114 to 115 (NE), aspartate 144, alanine 152, 155 to 160 (SAYNLS), and glutamine 216.

The protein belongs to the NAD kinase family. It depends on a divalent metal cation as a cofactor.

The protein resides in the cytoplasm. The enzyme catalyses NAD(+) + ATP = ADP + NADP(+) + H(+). Functionally, involved in the regulation of the intracellular balance of NAD and NADP, and is a key enzyme in the biosynthesis of NADP. Catalyzes specifically the phosphorylation on 2'-hydroxyl of the adenosine moiety of NAD to yield NADP. In Rickettsia canadensis (strain McKiel), this protein is NAD kinase.